A 204-amino-acid polypeptide reads, in one-letter code: Inactive ribonuclease-like protein 9 (204 aa).

The first 26 residues, 1–26 (MMRTLITTHPLLLLLLLQQLLQPVQF), serve as a signal peptide directing secretion. 3 cysteine pairs are disulfide-bonded: Cys-97–Cys-152, Cys-115–Cys-167, and Cys-122–Cys-129. Residues Asn-130 and Asn-142 are each glycosylated (N-linked (GlcNAc...) asparagine).

Belongs to the pancreatic ribonuclease family.

Its subcellular location is the secreted. Its function is as follows. Does not exhibit any ribonuclease activity. The polypeptide is Inactive ribonuclease-like protein 9 (RNASE9) (Macaca mulatta (Rhesus macaque)).